The sequence spans 486 residues: MTRIKLNYFVIGVVALLLALALWPNIPWRNGQEGQLDRIKARGELRVSTISSPLIYSTGKDGPSGFDYELAKRFADYLGVKLVMTPHHNINDLFDTLDSDDADMIAAGLIYNSERLKRARTGPAYYSVSQQLVYRLGSPRPKSFSDLKGQLIVASGSAHMTTLKQLKQTKYPDLNWGSSVDRSGKELLEQVADGKLDYTLGDSVTIALLQRIHPQLAVAFDVTDEEPVTWYFQQSHDDSLYAAMLDFYSEMVEDGSLARLEEKYLGHVGSFDYVDTKTFLSAIDNVLPSFRPLFEKHAGEIDWRLLAAIAYQESHWNPQATSPTGVRGLMMLTRATASGLGVKDRVDPEESIRGGSVYLQRLMQKVPDTIPEDERIWFALAAYNLGYGHMLDARKLTKNQNGNPDSWVDVKMRLPMLSQKRYYPSTTYGYARGHEAYNYVENIRRYQVSLVGYLQEKEKKAAQHAAIEAELGKAYPVVGPGWSINN.

The first 21 residues, Met1–Ala21, serve as a signal peptide directing secretion. The interval Leu22–Val268 is non-LT domain. An LT domain region spans residues Gly269–Asn486. The active site involves Glu313.

This sequence in the N-terminal section; belongs to the bacterial solute-binding protein 3 family. It in the C-terminal section; belongs to the transglycosylase Slt family.

It is found in the cell outer membrane. It catalyses the reaction Exolytic cleavage of the (1-&gt;4)-beta-glycosidic linkage between N-acetylmuramic acid (MurNAc) and N-acetylglucosamine (GlcNAc) residues in peptidoglycan, from either the reducing or the non-reducing ends of the peptidoglycan chains, with concomitant formation of a 1,6-anhydrobond in the MurNAc residue.. In terms of biological role, murein-degrading enzyme that degrades murein glycan strands and insoluble, high-molecular weight murein sacculi, with the concomitant formation of a 1,6-anhydromuramoyl product. Lytic transglycosylases (LTs) play an integral role in the metabolism of the peptidoglycan (PG) sacculus. Their lytic action creates space within the PG sacculus to allow for its expansion as well as for the insertion of various structures such as secretion systems and flagella. This chain is Membrane-bound lytic murein transglycosylase F, found in Yersinia enterocolitica serotype O:8 / biotype 1B (strain NCTC 13174 / 8081).